The following is a 444-amino-acid chain: Methylenetetrahydrofolate--tRNA-(uracil-5-)-methyltransferase TrmFO (444 aa).

10 to 15 (GAGLAG) contacts FAD.

This sequence belongs to the MnmG family. TrmFO subfamily. FAD serves as cofactor.

The protein localises to the cytoplasm. It carries out the reaction uridine(54) in tRNA + (6R)-5,10-methylene-5,6,7,8-tetrahydrofolate + NADH + H(+) = 5-methyluridine(54) in tRNA + (6S)-5,6,7,8-tetrahydrofolate + NAD(+). It catalyses the reaction uridine(54) in tRNA + (6R)-5,10-methylene-5,6,7,8-tetrahydrofolate + NADPH + H(+) = 5-methyluridine(54) in tRNA + (6S)-5,6,7,8-tetrahydrofolate + NADP(+). Functionally, catalyzes the folate-dependent formation of 5-methyl-uridine at position 54 (M-5-U54) in all tRNAs. The sequence is that of Methylenetetrahydrofolate--tRNA-(uracil-5-)-methyltransferase TrmFO from Streptococcus mutans serotype c (strain ATCC 700610 / UA159).